The primary structure comprises 146 residues: 3-dehydroquinate dehydratase (146 aa).

Tyrosine 24 (proton acceptor) is an active-site residue. Substrate contacts are provided by asparagine 73, histidine 79, and aspartate 86. Histidine 99 serves as the catalytic Proton donor. Substrate is bound by residues leucine 100–serine 101 and arginine 110.

It belongs to the type-II 3-dehydroquinase family. Homododecamer.

It carries out the reaction 3-dehydroquinate = 3-dehydroshikimate + H2O. It functions in the pathway metabolic intermediate biosynthesis; chorismate biosynthesis; chorismate from D-erythrose 4-phosphate and phosphoenolpyruvate: step 3/7. Catalyzes a trans-dehydration via an enolate intermediate. The sequence is that of 3-dehydroquinate dehydratase from Shewanella baltica (strain OS195).